The sequence spans 142 residues: Large ribosomal subunit protein bL17 (142 aa).

This sequence belongs to the bacterial ribosomal protein bL17 family. Part of the 50S ribosomal subunit. Contacts protein L32.

The chain is Large ribosomal subunit protein bL17 from Brucella abortus (strain S19).